A 1019-amino-acid chain; its full sequence is Probable inorganic carbon transporter subunit DabA 1 (1019 aa).

Zn(2+)-binding residues include Cys491 and Asp493. Residues 624-643 (VPTRLHSPRDEGSAAGGEGQ) form a disordered region. Residues His676 and Cys691 each contribute to the Zn(2+) site.

It belongs to the inorganic carbon transporter (TC 9.A.2) DabA family. As to quaternary structure, forms a complex with DabB. Zn(2+) is required as a cofactor.

The protein resides in the cell inner membrane. Its function is as follows. Part of an energy-coupled inorganic carbon pump. This is Probable inorganic carbon transporter subunit DabA 1 from Sorangium cellulosum (strain So ce56) (Polyangium cellulosum (strain So ce56)).